We begin with the raw amino-acid sequence, 29 residues long: Galanin (29 aa).

At Ala29 the chain carries Alanine amide.

Belongs to the galanin family.

The protein resides in the secreted. Its function is as follows. Contracts smooth muscle of the gastrointestinal and genitourinary tract, regulates growth hormone release, modulates insulin release, and may be involved in the control of adrenal secretion. The protein is Galanin (gal) of Amia calva (Bowfin).